Here is a 989-residue protein sequence, read N- to C-terminus: R3H domain-containing protein 2 (989 aa).

Disordered regions lie at residues 23-71 (EESV…AKSN) and 106-147 (SCPS…QEYT). A compositionally biased stretch (basic and acidic residues) spans 36–56 (PSKEEIEKESEDTSLRQETQR). The residue at position 37 (S37) is a Phosphoserine. A compositionally biased stretch (basic residues) spans 58-71 (TSNHGHARKRAKSN). Residues 109–143 (SDKEEEKSTKDVSEKEDKDKNKEKVPRRMLSRDSS) are compositionally biased toward basic and acidic residues. At S143 the chain carries Phosphoserine. Residues 169 to 232 (RMMLLKLEQE…AVIINKTSNT (64 aa)) form the R3H domain. In terms of domain architecture, SUZ spans 233–303 (RIPEQRFSEH…VRERIFARET (71 aa)). Disordered stretches follow at residues 267 to 288 (DDNQIRVPLQDGRRSKSIEERE), 306 to 390 (NGYL…ISRP), 416 to 479 (TAQQ…FQPP), 493 to 524 (ASTGQPLPTSNYSTSSHAPPTQQVLPPQGYMQ), 674 to 738 (GTSP…PSMV), 751 to 793 (RGQK…SLSN), and 848 to 867 (QGQSGLKHGNRSKRQALKSA). Over residues 277–288 (DGRRSKSIEERE) the composition is skewed to basic and acidic residues. A compositionally biased stretch (low complexity) spans 320-331 (SRTSSSRQSSTD). A phosphoserine mark is found at S344, S347, and S363. Positions 416-428 (TAQQQQQQQQQLP) are enriched in low complexity. Composition is skewed to polar residues over residues 454–466 (PFGQMSLSRQGST) and 493–517 (ASTGQPLPTSNYSTSSHAPPTQQVL). A compositionally biased stretch (pro residues) spans 695-704 (SPSPCSPPQM). The segment covering 705–727 (PQQYSGVSPSGPGVVVMQLNVPN) has biased composition (low complexity). Residues 761–771 (PESSPQANTQM) show a composition bias toward polar residues. Residues 772 to 790 (SSSPVTSPTQSPAPSPVTS) are compositionally biased toward low complexity. Phosphoserine is present on residues S866 and S868. T869 and T873 each carry phosphothreonine.

The protein resides in the nucleus. The polypeptide is R3H domain-containing protein 2 (R3HDM2) (Bos taurus (Bovine)).